Reading from the N-terminus, the 174-residue chain is UPF0340 protein SE_1711 (174 aa).

Belongs to the UPF0340 family.

This Staphylococcus epidermidis (strain ATCC 12228 / FDA PCI 1200) protein is UPF0340 protein SE_1711.